The chain runs to 542 residues: CTP synthase (542 aa).

Positions 1 to 266 are amidoligase domain; that stretch reads MATNYIFVTG…DEFVCNRFHL (266 aa). Ser14 contacts CTP. Ser14 is a UTP binding site. ATP-binding positions include 15-20 and Asp72; that span reads SLGKGI. Positions 72 and 140 each coordinate Mg(2+). Residues 147–149, 187–192, and Lys223 contribute to the CTP site; these read DIE and KTKPTQ. UTP contacts are provided by residues 187-192 and Lys223; that span reads KTKPTQ. 239–241 lines the ATP pocket; it reads KDV. Residues 291–542 form the Glutamine amidotransferase type-1 domain; the sequence is TIGMVGKYVE…VKAAKENQKK (252 aa). Gly352 contributes to the L-glutamine binding site. Cys379 functions as the Nucleophile; for glutamine hydrolysis in the catalytic mechanism. L-glutamine contacts are provided by residues 380-383, Glu403, and Arg470; that span reads LGMQ. Residues His515 and Glu517 contribute to the active site.

The protein belongs to the CTP synthase family. As to quaternary structure, homotetramer.

The catalysed reaction is UTP + L-glutamine + ATP + H2O = CTP + L-glutamate + ADP + phosphate + 2 H(+). It catalyses the reaction L-glutamine + H2O = L-glutamate + NH4(+). The enzyme catalyses UTP + NH4(+) + ATP = CTP + ADP + phosphate + 2 H(+). Its pathway is pyrimidine metabolism; CTP biosynthesis via de novo pathway; CTP from UDP: step 2/2. Allosterically activated by GTP, when glutamine is the substrate; GTP has no effect on the reaction when ammonia is the substrate. The allosteric effector GTP functions by stabilizing the protein conformation that binds the tetrahedral intermediate(s) formed during glutamine hydrolysis. Inhibited by the product CTP, via allosteric rather than competitive inhibition. Its function is as follows. Catalyzes the ATP-dependent amination of UTP to CTP with either L-glutamine or ammonia as the source of nitrogen. Regulates intracellular CTP levels through interactions with the four ribonucleotide triphosphates. The protein is CTP synthase of Actinobacillus succinogenes (strain ATCC 55618 / DSM 22257 / CCUG 43843 / 130Z).